The sequence spans 651 residues: MGKKHKKHKSDKHPYEEYVEKPLKLVLKVGGNEVAELSTGSAGLDSSLYEDKSEHEKHKDRKRKKRKKGEKQVPGEEKEKRKRKVKEDKRKRDREHPDSEGEQELRCQTPIRLELSPEKPLTSSLSKQEEVEQTPLQEALNQLMRQLQRKDPSSFFSFPVTDFIAPGYSMIIKNPMDFSTMKEKIKNNGYQSIEELKDNFKLMCTNAMTYNKPDTIYYKAAKKLLHSGMKILSQERIQSLKQSIEFMADLQKTRKQKDKVELQLSGEDESGSGKDKGEPVDGDTKAFKTPNKEHKKKDKDLLEDKLRINSLEREQEQIDRIVRESGGKLTRRLANSQCEFERRKPDGTTTLGLLNPVDLTAGEAGYCPVKLGMTAGRLQSGVNMLQGFKEDKRNKVTPVTYLNYGPYSSYAPTYDSTFANISKEDSDLIYSTYGEDSNQGSFSIHEFLMKSQDYPFLMADSLLDVLTKGGHSRSLRELETPLEEDEGPHERSDALKEIMEIDIAARLDSANNDRLTALKAVTNFGMPMEEFDSEEAEIFQRKLDETTKLLRELQDAQNERLSTKPPPNMICLLGPSYREMHLAERVTNNLKELAQQVTPGDIVSTYGIRKAMGISIPLPDIGDSGVDLTDEFQEPKKTVTITENECGPVTV.

Disordered regions lie at residues 36-133 (ELST…EVEQ) and 257-298 (KDKV…KKKD). The segment covering 58–69 (HKDRKRKKRKKG) has biased composition (basic residues). Residues 65 to 96 (KRKKGEKQVPGEEKEKRKRKVKEDKRKRDREH) carry the Nuclear localization signal motif. Residues 70–105 (EKQVPGEEKEKRKRKVKEDKRKRDREHPDSEGEQEL) are compositionally biased toward basic and acidic residues. The Bromo domain occupies 131-235 (VEQTPLQEAL…HSGMKILSQE (105 aa)). Basic and acidic residues predominate over residues 271–298 (GSGKDKGEPVDGDTKAFKTPNKEHKKKD). Positions 533 to 564 (SEEAEIFQRKLDETTKLLRELQDAQNERLSTK) form a coiled coil.

The protein localises to the nucleus. It localises to the chromosome. Its function is as follows. Acts both as coactivator and as corepressor. May play a role in chromatin remodeling. Participates in the Wnt signaling pathway. Transcriptional corepressor that down-regulates the expression of target genes. Binds to target promoters, leading to increased histone H3 acetylation. Coactivator for TP53-mediated activation of transcription of a set of target genes. Required for TP53-mediated cell-cycle arrest in response to oncogene activation. Inhibits cell cycle progression from G1 to S phase. The polypeptide is Bromodomain-containing protein 7 (BRD7) (Gallus gallus (Chicken)).